Reading from the N-terminus, the 140-residue chain is MFCYFLSKSYDDCSRYYIISNMAFYFPVYDSDSPTTVHHDERKESWRSHGFIVCLHIRCCICCKYNSKIKKPSLNIALRIQSLKIIKILIFQFYSTKPLWDKNSPEYKQLRSEIEATKRDEEVKNGELIDPNVTTEDEKL.

The segment at 121–140 (EEVKNGELIDPNVTTEDEKL) is disordered.

This is an uncharacterized protein from Schizosaccharomyces pombe (strain 972 / ATCC 24843) (Fission yeast).